The sequence spans 456 residues: 3-isopropylmalate dehydratase large subunit (456 aa).

[4Fe-4S] cluster-binding residues include Cys-336, Cys-396, and Cys-399.

The protein belongs to the aconitase/IPM isomerase family. LeuC type 1 subfamily. In terms of assembly, heterodimer of LeuC and LeuD. [4Fe-4S] cluster serves as cofactor.

The catalysed reaction is (2R,3S)-3-isopropylmalate = (2S)-2-isopropylmalate. It participates in amino-acid biosynthesis; L-leucine biosynthesis; L-leucine from 3-methyl-2-oxobutanoate: step 2/4. Catalyzes the isomerization between 2-isopropylmalate and 3-isopropylmalate, via the formation of 2-isopropylmaleate. The sequence is that of 3-isopropylmalate dehydratase large subunit from Staphylococcus aureus (strain MW2).